Here is a 329-residue protein sequence, read N- to C-terminus: uncharacterized protein (329 aa).

Residues 56–247 adopt a coiled-coil conformation; sequence LNKEEQFQED…EAEKTHQAKL (192 aa).

This is an uncharacterized protein from Bos taurus (Bovine).